The primary structure comprises 231 residues: Large ribosomal subunit protein uL1 (231 aa).

This sequence belongs to the universal ribosomal protein uL1 family. Part of the 50S ribosomal subunit.

Its function is as follows. Binds directly to 23S rRNA. The L1 stalk is quite mobile in the ribosome, and is involved in E site tRNA release. Functionally, protein L1 is also a translational repressor protein, it controls the translation of the L11 operon by binding to its mRNA. The polypeptide is Large ribosomal subunit protein uL1 (Pseudomonas syringae pv. syringae (strain B728a)).